We begin with the raw amino-acid sequence, 302 residues long: Quinolinate synthase (302 aa).

The iminosuccinate site is built by histidine 24 and serine 41. Cysteine 86 lines the [4Fe-4S] cluster pocket. Iminosuccinate-binding positions include tyrosine 112 to asparagine 114 and serine 129. Cysteine 171 provides a ligand contact to [4Fe-4S] cluster. Residues histidine 197–glutamate 199 and threonine 214 each bind iminosuccinate. Residue cysteine 259 participates in [4Fe-4S] cluster binding.

This sequence belongs to the quinolinate synthase family. Type 2 subfamily. [4Fe-4S] cluster serves as cofactor.

It is found in the cytoplasm. The catalysed reaction is iminosuccinate + dihydroxyacetone phosphate = quinolinate + phosphate + 2 H2O + H(+). The protein operates within cofactor biosynthesis; NAD(+) biosynthesis; quinolinate from iminoaspartate: step 1/1. Its function is as follows. Catalyzes the condensation of iminoaspartate with dihydroxyacetone phosphate to form quinolinate. In Dehalococcoides mccartyi (strain ATCC BAA-2100 / JCM 16839 / KCTC 5957 / BAV1), this protein is Quinolinate synthase.